The following is a 68-amino-acid chain: uncharacterized protein (68 aa).

Helical transmembrane passes span 1-21 (MLFI…YFLP) and 28-48 (VHFS…LSSV).

It is found in the cell membrane. This is an uncharacterized protein from Haemophilus influenzae (strain ATCC 51907 / DSM 11121 / KW20 / Rd).